The following is a 510-amino-acid chain: Maturase K (510 aa).

It belongs to the intron maturase 2 family. MatK subfamily.

It is found in the plastid. It localises to the chloroplast. Its function is as follows. Usually encoded in the trnK tRNA gene intron. Probably assists in splicing its own and other chloroplast group II introns. The sequence is that of Maturase K from Penstemon heterophyllus (Foothill penstemon).